A 55-amino-acid polypeptide reads, in one-letter code: ATP synthase F(0) complex subunit 8 (55 aa).

Residues 4–24 (LLPTPWFTIFIYAWMVLLAVI) form a helical membrane-spanning segment.

This sequence belongs to the ATPase protein 8 family. As to quaternary structure, component of the ATP synthase complex composed at least of ATP5F1A/subunit alpha, ATP5F1B/subunit beta, ATP5MC1/subunit c (homooctomer), MT-ATP6/subunit a, MT-ATP8/subunit 8, ATP5ME/subunit e, ATP5MF/subunit f, ATP5MG/subunit g, ATP5MK/subunit k, ATP5MJ/subunit j, ATP5F1C/subunit gamma, ATP5F1D/subunit delta, ATP5F1E/subunit epsilon, ATP5PF/subunit F6, ATP5PB/subunit b, ATP5PD/subunit d, ATP5PO/subunit OSCP. ATP synthase complex consists of a soluble F(1) head domain (subunits alpha(3) and beta(3)) - the catalytic core - and a membrane F(0) domain - the membrane proton channel (subunits c, a, 8, e, f, g, k and j). These two domains are linked by a central stalk (subunits gamma, delta, and epsilon) rotating inside the F1 region and a stationary peripheral stalk (subunits F6, b, d, and OSCP).

It localises to the mitochondrion membrane. In terms of biological role, subunit 8, of the mitochondrial membrane ATP synthase complex (F(1)F(0) ATP synthase or Complex V) that produces ATP from ADP in the presence of a proton gradient across the membrane which is generated by electron transport complexes of the respiratory chain. ATP synthase complex consist of a soluble F(1) head domain - the catalytic core - and a membrane F(1) domain - the membrane proton channel. These two domains are linked by a central stalk rotating inside the F(1) region and a stationary peripheral stalk. During catalysis, ATP synthesis in the catalytic domain of F(1) is coupled via a rotary mechanism of the central stalk subunits to proton translocation. In vivo, can only synthesize ATP although its ATP hydrolase activity can be activated artificially in vitro. Part of the complex F(0) domain. The chain is ATP synthase F(0) complex subunit 8 from Dicentrarchus labrax (European seabass).